The primary structure comprises 481 residues: Protein hedgehog (481 aa).

The N-terminal stretch at 1 to 19 (MDNQAVSALWSCASATCLS) is a signal peptide. Residues 20–90 (LDAKRHSIEP…LALNFRHAHS (71 aa)) constitute a propeptide that is removed on maturation. Residues 26-56 (SIEPNPDGQASPDVNNNNNNHNKSTTTVDAH) form a disordered region. Cysteine 91 is lipidated: N-palmitoyl cysteine. Residues glutamate 155, glutamate 156, aspartate 161, threonine 191, glutamate 192, aspartate 195, and aspartate 197 each contribute to the Ca(2+) site. Glycine 264 carries Cholesterol glycine ester lipidation.

The protein belongs to the hedgehog family. In terms of assembly, interacts with shf. In terms of processing, the C-terminal part of the hedgehog protein precursor displays an autoproteolysis activity that results in the cleavage of the full-length protein into two parts (N-product and C-product). In addition, the C-terminal part displays a cholesterol transferase activity that results by the covalent attachment of a cholesterol moiety to the C-terminal of the newly generated N-product. The N-product is the active species in both local and long-range signaling, whereas the C-product has no signaling activity. Post-translationally, cholesterylation is required for N-product targeting to lipid rafts and multimerization. N-palmitoylation by Rasp of the hedgehog N-product, within the secretory pathway, is required for the embryonic and larval patterning activities of the hedgehog signal.

The protein resides in the nucleus. It is found in the cytoplasm. Its subcellular location is the cell membrane. It catalyses the reaction glycyl-L-cysteinyl-[protein] + cholesterol + H(+) = [protein]-C-terminal glycyl cholesterol ester + N-terminal L-cysteinyl-[protein]. In terms of biological role, the C-terminal part of the hedgehog protein precursor displays an autoproteolysis activity that results in the cleavage of the full-length protein into two parts (N-product and C-product). In addition, the C-terminal part displays a cholesterol transferase activity that results by the covalent attachment of a cholesterol moiety to the C-terminal of the newly generated N-product. Once cleaved, the C-product has no signaling activity and diffuses from the cell. Functionally, the dually lipidated hedgehog protein N-product is a morphogen which is essential for a variety of patterning events during development. Establishes the anterior-posterior axis of the embryonic segments and patterns the larval imaginal disks. Binds to the patched (ptc) receptor, which functions in association with smoothened (smo), to activate the transcription of target genes wingless (wg), decapentaplegic (dpp) and ptc. In the absence of hh, ptc represses the constitutive signaling activity of smo through fused (fu). Essential component of a signaling pathway which regulates the Duox-dependent gut immune response to bacterial uracil; required to activate Cad99C-dependent endosome formation, norpA-dependent Ca2+ mobilization and p38 MAPK, which are essential steps in the Duox-dependent production of reactive oxygen species (ROS) in response to intestinal bacterial infection. During photoreceptor differentiation, it up-regulates transcription of Ubr3, which in turn promotes the hh-signaling pathway by mediating the ubiquitination and degradation of cos. This Drosophila hydei (Fruit fly) protein is Protein hedgehog.